A 216-amino-acid polypeptide reads, in one-letter code: Ribonuclease HII (216 aa).

Positions 28-216 (ACIAGIDEAG…GVKEYVRSEE (189 aa)) constitute an RNase H type-2 domain. The a divalent metal cation site is built by Asp-34, Glu-35, and Asp-126.

Belongs to the RNase HII family. The cofactor is Mn(2+). Mg(2+) is required as a cofactor.

The protein localises to the cytoplasm. It catalyses the reaction Endonucleolytic cleavage to 5'-phosphomonoester.. Endonuclease that specifically degrades the RNA of RNA-DNA hybrids. This chain is Ribonuclease HII, found in Geotalea uraniireducens (strain Rf4) (Geobacter uraniireducens).